Consider the following 638-residue polypeptide: Rik1-associated factor 1 (638 aa).

WD repeat units lie at residues 297–336 (KEYS…CGIF), 486–525 (TTQK…KPLS), 544–583 (EVDA…PFIQ), and 587–626 (EMNS…GNKF).

As to quaternary structure, component of the Clr4 methyltransferase complex (ClrC) composed of at least clr4, rik1, pcu4, rbx1, raf1 and raf2. The cullin pcu4, rik1, raf1, raf2 and the ring-box protein rbx1 are components of an E3 ubiquitin ligase, whose activity is essential for heterochromatin assembly. Interacts with nup189.

It localises to the cytoplasm. The protein resides in the nucleus. Its subcellular location is the chromosome. Its function is as follows. Component of the Clr4 methyltransferase complex (ClrC) which contributes to the establishment of heterochromatin by specifically methylating histone H3 to form H3K9me. ClrC preferentially ubiquitylates H3K14 and ClrC-mediated H3 ubiquitination promotes clr4 methyltransferase activity for the methylation of H3K9. H3K9me represents a specific tag for epigenetic transcriptional repression by recruiting swi6/HP1 to methylated histones which leads to transcriptional silencing within centromeric heterochromatin, telomeric regions and at the silent mating-type loci. Has a role in both mitotic and meiotic chromosome segregation. The protein is Rik1-associated factor 1 (raf1) of Schizosaccharomyces pombe (strain 972 / ATCC 24843) (Fission yeast).